The chain runs to 370 residues: Protein SHI RELATED SEQUENCE 1 (370 aa).

Residues 1–37 are disordered; it reads MAGFFSLDGGGGGGGGGGNNQEDHRSNTNPPPPVSEA. Gly residues predominate over residues 8–19; it reads DGGGGGGGGGGN. 6 residues coordinate Zn(2+): Cys-144, Cys-147, Cys-155, Cys-160, Cys-164, and Cys-171. A DNA-binding region (zn(2)-C6 fungal-type; degenerate) is located at residues 144-171; it reads CQDCGNQAKKDCSHMRCRTCCKSRGFEC. Residues 271 to 274 carry the Required for homo- and heterodimerization motif; that stretch reads IGGH.

Belongs to the SHI protein family. In terms of assembly, forms homodimers and heterodimers with LRP1. As to expression, expressed in flowers, seeds and seedlings.

Its subcellular location is the nucleus. Transcription activator that binds DNA on 5'-ACTCTAC-3' and promotes auxin homeostasis-regulating gene expression (e.g. YUC genes), as well as genes affecting stamen development, cell expansion and timing of flowering. Synergistically with other SHI-related proteins, regulates gynoecium, stamen and leaf development in a dose-dependent manner, controlling apical-basal patterning. Promotes style and stigma formation, and influences vascular development during gynoecium development. May also have a role in the formation and/or maintenance of the shoot apical meristem (SAM). The polypeptide is Protein SHI RELATED SEQUENCE 1 (SRS1) (Arabidopsis thaliana (Mouse-ear cress)).